The sequence spans 185 residues: ATP synthase subunit delta (185 aa).

It belongs to the ATPase delta chain family. In terms of assembly, F-type ATPases have 2 components, F(1) - the catalytic core - and F(0) - the membrane proton channel. F(1) has five subunits: alpha(3), beta(3), gamma(1), delta(1), epsilon(1). CF(0) has four main subunits: a(1), b(1), b'(1) and c(10-14). The alpha and beta chains form an alternating ring which encloses part of the gamma chain. F(1) is attached to F(0) by a central stalk formed by the gamma and epsilon chains, while a peripheral stalk is formed by the delta, b and b' chains.

It localises to the cell inner membrane. In terms of biological role, f(1)F(0) ATP synthase produces ATP from ADP in the presence of a proton or sodium gradient. F-type ATPases consist of two structural domains, F(1) containing the extramembraneous catalytic core and F(0) containing the membrane proton channel, linked together by a central stalk and a peripheral stalk. During catalysis, ATP synthesis in the catalytic domain of F(1) is coupled via a rotary mechanism of the central stalk subunits to proton translocation. Its function is as follows. This protein is part of the stalk that links CF(0) to CF(1). It either transmits conformational changes from CF(0) to CF(1) or is implicated in proton conduction. This Gloeobacter violaceus (strain ATCC 29082 / PCC 7421) protein is ATP synthase subunit delta.